Reading from the N-terminus, the 242-residue chain is Interleukin-34 (242 aa).

A signal peptide spans 1-20; sequence MPRGFTWLRYLGIFLGVALG. Asn-76 is a glycosylation site (N-linked (GlcNAc...) asparagine). A disordered region spans residues 210–242; that stretch reads TQLYPPPPWSPSSPPHSTGSVRPVRAQGEGLLP. Residues 213 to 223 are compositionally biased toward pro residues; the sequence is YPPPPWSPSSP.

Belongs to the IL-34 family. As to quaternary structure, homodimer. Interacts with CSF1R. As to expression, detected in the sinusoidal epithelium in the red pulp of spleen (at protein level). Predominantly expressed in spleen. Also detected in a range of other tissues including heart, brain, lung, liver, kidney, thymus, testis, ovary, small intestine, prostate and colon.

It localises to the secreted. Its function is as follows. Cytokine that promotes the proliferation, survival and differentiation of monocytes and macrophages. Promotes the release of pro-inflammatory chemokines, and thereby plays an important role in innate immunity and in inflammatory processes. Plays an important role in the regulation of osteoclast proliferation and differentiation, and in the regulation of bone resorption. Signaling via CSF1R and its downstream effectors stimulates phosphorylation of MAPK1/ERK2 AND MAPK3/ERK1. The protein is Interleukin-34 (IL34) of Homo sapiens (Human).